A 363-amino-acid chain; its full sequence is L-serine dehydratase/L-threonine deaminase (363 aa).

A2 is subject to N-acetylalanine. At K41 the chain carries N6-(pyridoxal phosphate)lysine. The segment at 74–98 (RGRSHSGDEQPHVRSQALLPDTPSP) is disordered. P164 lines the pyridoxal 5'-phosphate pocket.

The protein belongs to the serine/threonine dehydratase family. As to quaternary structure, homodimer. Pyridoxal 5'-phosphate is required as a cofactor. Predominantly expressed in the periportal regions of the liver.

Its subcellular location is the cytoplasm. It carries out the reaction L-serine = pyruvate + NH4(+). The catalysed reaction is L-threonine = 2-oxobutanoate + NH4(+). Its pathway is carbohydrate biosynthesis; gluconeogenesis. Its function is as follows. Catalyzes the pyridoxal-phosphate-dependent dehydrative deamination of L-threonine and L-serine to ammonia and alpha-ketobutyrate and pyruvate, respectively. This Rattus norvegicus (Rat) protein is L-serine dehydratase/L-threonine deaminase (Sds).